The sequence spans 151 residues: Myosin light polypeptide 6 (151 aa).

Cys-2 carries the N-acetylcysteine modification. The EF-hand 1 domain maps to 7 to 42; it reads DQTAEFKEAFQLFDRTGDGKILYSQCGDVMRALGQN. At Ser-57 the chain carries Phosphoserine. Lys-81 bears the N6-acetyllysine mark. EF-hand domains are found at residues 84–119 and 119–151; these read GTYEDYVEGLRVFDKEGNGTVMGAEIRHVLVTLGEK and KMTEEEVEMLVAGHEDSNGCINYEELLRMVLNG.

In terms of assembly, myosin is a hexamer of 2 heavy chains and 4 light chains. Interacts with SPATA6.

In terms of biological role, regulatory light chain of myosin. Does not bind calcium. This is Myosin light polypeptide 6 (Myl6) from Rattus norvegicus (Rat).